The following is a 613-amino-acid chain: DNA mismatch repair protein MutL (613 aa).

The protein belongs to the DNA mismatch repair MutL/HexB family.

This protein is involved in the repair of mismatches in DNA. It is required for dam-dependent methyl-directed DNA mismatch repair. May act as a 'molecular matchmaker', a protein that promotes the formation of a stable complex between two or more DNA-binding proteins in an ATP-dependent manner without itself being part of a final effector complex. In Flavobacterium psychrophilum (strain ATCC 49511 / DSM 21280 / CIP 103535 / JIP02/86), this protein is DNA mismatch repair protein MutL.